Reading from the N-terminus, the 193-residue chain is Acyl carrier protein phosphodiesterase (193 aa).

The protein belongs to the AcpH family.

The catalysed reaction is holo-[ACP] + H2O = apo-[ACP] + (R)-4'-phosphopantetheine + H(+). Functionally, converts holo-ACP to apo-ACP by hydrolytic cleavage of the phosphopantetheine prosthetic group from ACP. The polypeptide is Acyl carrier protein phosphodiesterase (Escherichia coli O7:K1 (strain IAI39 / ExPEC)).